The chain runs to 356 residues: Histidinol-phosphate aminotransferase (356 aa).

Lys-210 is modified (N6-(pyridoxal phosphate)lysine).

It belongs to the class-II pyridoxal-phosphate-dependent aminotransferase family. Histidinol-phosphate aminotransferase subfamily. As to quaternary structure, homodimer. Requires pyridoxal 5'-phosphate as cofactor.

The catalysed reaction is L-histidinol phosphate + 2-oxoglutarate = 3-(imidazol-4-yl)-2-oxopropyl phosphate + L-glutamate. It participates in amino-acid biosynthesis; L-histidine biosynthesis; L-histidine from 5-phospho-alpha-D-ribose 1-diphosphate: step 7/9. This chain is Histidinol-phosphate aminotransferase, found in Gluconacetobacter diazotrophicus (strain ATCC 49037 / DSM 5601 / CCUG 37298 / CIP 103539 / LMG 7603 / PAl5).